We begin with the raw amino-acid sequence, 280 residues long: Pupal cuticle protein 36a (280 aa).

A signal peptide spans 1–15 (MKLFVLAAVLGVCLA). The Chitin-binding type R&amp;R domain occupies 135–198 (AEGFAYDFET…SQGAHLPTPP (64 aa)). The disordered stretch occupies residues 258–280 (GAGRAGGTATSASEAPTTTIRLM).

In Manduca sexta (Tobacco hawkmoth), this protein is Pupal cuticle protein 36a (PCP36a).